The primary structure comprises 192 residues: Transcription termination/antitermination protein NusG (192 aa).

This sequence belongs to the NusG family.

Participates in transcription elongation, termination and antitermination. This is Transcription termination/antitermination protein NusG from Rickettsia prowazekii (strain Madrid E).